A 487-amino-acid polypeptide reads, in one-letter code: Glutamyl-tRNA(Gln) amidotransferase subunit A (487 aa).

Active-site charge relay system residues include K80 and S155. S179 serves as the catalytic Acyl-ester intermediate.

It belongs to the amidase family. GatA subfamily. As to quaternary structure, heterotrimer of A, B and C subunits.

The catalysed reaction is L-glutamyl-tRNA(Gln) + L-glutamine + ATP + H2O = L-glutaminyl-tRNA(Gln) + L-glutamate + ADP + phosphate + H(+). Its function is as follows. Allows the formation of correctly charged Gln-tRNA(Gln) through the transamidation of misacylated Glu-tRNA(Gln) in organisms which lack glutaminyl-tRNA synthetase. The reaction takes place in the presence of glutamine and ATP through an activated gamma-phospho-Glu-tRNA(Gln). This is Glutamyl-tRNA(Gln) amidotransferase subunit A from Leptospira interrogans serogroup Icterohaemorrhagiae serovar Lai (strain 56601).